A 385-amino-acid chain; its full sequence is 1-deoxy-D-xylulose 5-phosphate reductoisomerase (385 aa).

NADPH is bound by residues T10, G11, S12, I13, K37, and N124. K125 serves as a coordination point for 1-deoxy-D-xylulose 5-phosphate. E126 is a binding site for NADPH. Residue D150 coordinates Mn(2+). 1-deoxy-D-xylulose 5-phosphate is bound by residues S151, E152, S176, and H199. E152 serves as a coordination point for Mn(2+). Residue G205 participates in NADPH binding. 4 residues coordinate 1-deoxy-D-xylulose 5-phosphate: S212, N217, K218, and E221. A Mn(2+)-binding site is contributed by E221.

The protein belongs to the DXR family. It depends on Mg(2+) as a cofactor. Requires Mn(2+) as cofactor.

The enzyme catalyses 2-C-methyl-D-erythritol 4-phosphate + NADP(+) = 1-deoxy-D-xylulose 5-phosphate + NADPH + H(+). Its pathway is isoprenoid biosynthesis; isopentenyl diphosphate biosynthesis via DXP pathway; isopentenyl diphosphate from 1-deoxy-D-xylulose 5-phosphate: step 1/6. Functionally, catalyzes the NADPH-dependent rearrangement and reduction of 1-deoxy-D-xylulose-5-phosphate (DXP) to 2-C-methyl-D-erythritol 4-phosphate (MEP). This is 1-deoxy-D-xylulose 5-phosphate reductoisomerase from Clostridium botulinum (strain Okra / Type B1).